We begin with the raw amino-acid sequence, 424 residues long: S-inosyl-L-homocysteine hydrolase (424 aa).

Substrate-binding residues include Asp-130 and Glu-155. Residue 156–158 (TTT) participates in NAD(+) binding. Positions 185 and 189 each coordinate substrate. Residues Asn-190, 219 to 224 (GYGWCG), Glu-242, Asn-277, 298 to 300 (AGH), and Asn-346 contribute to the NAD(+) site.

This sequence belongs to the adenosylhomocysteinase family. NAD(+) is required as a cofactor.

Its subcellular location is the cytoplasm. The enzyme catalyses S-inosyl-L-homocysteine + H2O = L-homocysteine + inosine. It functions in the pathway amino-acid biosynthesis; S-adenosyl-L-methionine biosynthesis. Catalyzes the hydrolysis of S-inosyl-L-homocysteine (SIH) to L-homocysteine (Hcy) and inosine. Likely functions in a S-adenosyl-L-methionine (SAM) recycling pathway from S-adenosyl-L-homocysteine (SAH) produced from SAM-dependent methylation reactions. Can also catalyze the reverse reaction in vitro, i.e. the synthesis of SIH from Hcy and inosine. In Methanopyrus kandleri (strain AV19 / DSM 6324 / JCM 9639 / NBRC 100938), this protein is S-inosyl-L-homocysteine hydrolase.